The primary structure comprises 567 residues: Putative laccase-17 (567 aa).

Positions 1–22 are cleaved as a signal peptide; the sequence is MPSRGCSCWLLSLALLCSLAAA. Plastocyanin-like domains follow at residues 30–146 and 158–310; these read VIRE…PRDG and ELAP…YGAA. N76 is a glycosylation site (N-linked (GlcNAc...) asparagine). Residues H80, H82, H125, and H127 each coordinate Cu cation. 10 N-linked (GlcNAc...) asparagine glycosylation sites follow: N187, N241, N298, N312, N327, N365, N368, N378, N388, and N430. Residues 415–551 enclose the Plastocyanin-like 3 domain; it reads DFPANPPVQF…AMAFLVDDGV (137 aa). Cu cation contacts are provided by H468, H471, H473, H530, C531, H532, and H536.

The protein belongs to the multicopper oxidase family. Cu cation serves as cofactor.

The protein localises to the secreted. The protein resides in the extracellular space. It is found in the apoplast. It catalyses the reaction 4 hydroquinone + O2 = 4 benzosemiquinone + 2 H2O. Its function is as follows. Lignin degradation and detoxification of lignin-derived products. This is Putative laccase-17 (LAC17) from Oryza sativa subsp. japonica (Rice).